The primary structure comprises 156 residues: MSRRHSAEKREINPDPKFGDLIVTKFMNAVMYDGKKSVAETIVYGALDQVQSKTKQEPVTVFHQALDNVAPHVEVRSRRVGGATYQVPVDVRPERRQALAIRWLIAAARNRNETTMIDRLSGELMDAANNRGTAVKKREDTHKMAEANRAFAHYRW.

The protein belongs to the universal ribosomal protein uS7 family. As to quaternary structure, part of the 30S ribosomal subunit. Contacts proteins S9 and S11.

Its function is as follows. One of the primary rRNA binding proteins, it binds directly to 16S rRNA where it nucleates assembly of the head domain of the 30S subunit. Is located at the subunit interface close to the decoding center, probably blocks exit of the E-site tRNA. In Mesorhizobium japonicum (strain LMG 29417 / CECT 9101 / MAFF 303099) (Mesorhizobium loti (strain MAFF 303099)), this protein is Small ribosomal subunit protein uS7.